The following is a 378-amino-acid chain: MNAPSIAQDVTTVPVSLGNRSYDILIGKGLVDRAGEELAKRLKGVRVAVVTDENVAKAHLERLTASFAKAGVDVTPVIVAPGEKSKSFGTLETVTNAVLAARLERGDAVVAFGGGVVGDLSGFVAGIVRRGMNFVQMPTSLLSQVDSSVGGKTGVNTAHGKNLVGVFYQPQLVLADTEVLDTLSPREFRAGYAEVAKYGLIDRPDFFEWLEQNWQEVFSGGAARTQAIAESCRCKAAVVARDERETGDRALLNLGHTFGHALETATGYDSTRLVHGEGVAIGMALAHRFSVKMNLCGIEDAERVEAHLKAVGLPYRLSDVPGGLPPAEKLMDYIAQDKKVARGALTFILTRGIGQSFIAKDVPPAAVLGFLKERLETK.

NAD(+)-binding positions include 115 to 119 (GVVGD), 139 to 140 (TS), Lys-152, and Lys-161. Residues Glu-194, His-256, and His-275 each coordinate Zn(2+).

The protein belongs to the sugar phosphate cyclases superfamily. Dehydroquinate synthase family. Co(2+) is required as a cofactor. It depends on Zn(2+) as a cofactor. Requires NAD(+) as cofactor.

It localises to the cytoplasm. The catalysed reaction is 7-phospho-2-dehydro-3-deoxy-D-arabino-heptonate = 3-dehydroquinate + phosphate. Its pathway is metabolic intermediate biosynthesis; chorismate biosynthesis; chorismate from D-erythrose 4-phosphate and phosphoenolpyruvate: step 2/7. In terms of biological role, catalyzes the conversion of 3-deoxy-D-arabino-heptulosonate 7-phosphate (DAHP) to dehydroquinate (DHQ). This is 3-dehydroquinate synthase from Brucella anthropi (strain ATCC 49188 / DSM 6882 / CCUG 24695 / JCM 21032 / LMG 3331 / NBRC 15819 / NCTC 12168 / Alc 37) (Ochrobactrum anthropi).